A 178-amino-acid polypeptide reads, in one-letter code: Aspartic proteinase nepenthesin-2 (178 aa).

D98 is an active-site residue.

It belongs to the peptidase A1 family.

Its subcellular location is the secreted. The catalysed reaction is Similar to pepsin, but also cleaves on either side of Asp and at Lys-|-Arg.. Inhibited by pepstatin and by diazoacetyl-D,L-norleucine methyl ester (DAN) in the presence of Cu(2+) ions. Extracellular proteinase found in the pitcher fluid of carnivorous plants. Digest prey for nitrogen uptake. The sequence is that of Aspartic proteinase nepenthesin-2 from Nepenthes distillatoria (Pitcher plant).